The sequence spans 61 residues: Photosystem II reaction center protein K (61 aa).

Residues 1–24 (MLNTFSLIGICLNSTLYSSSFFFG) constitute a propeptide that is removed on maturation. Residues 36–56 (IVDIMPVIPLFFFLLAFVWQA) form a helical membrane-spanning segment.

The protein belongs to the PsbK family. PSII is composed of 1 copy each of membrane proteins PsbA, PsbB, PsbC, PsbD, PsbE, PsbF, PsbH, PsbI, PsbJ, PsbK, PsbL, PsbM, PsbT, PsbX, PsbY, PsbZ, Psb30/Ycf12, at least 3 peripheral proteins of the oxygen-evolving complex and a large number of cofactors. It forms dimeric complexes.

It is found in the plastid. Its subcellular location is the chloroplast thylakoid membrane. Its function is as follows. One of the components of the core complex of photosystem II (PSII). PSII is a light-driven water:plastoquinone oxidoreductase that uses light energy to abstract electrons from H(2)O, generating O(2) and a proton gradient subsequently used for ATP formation. It consists of a core antenna complex that captures photons, and an electron transfer chain that converts photonic excitation into a charge separation. The sequence is that of Photosystem II reaction center protein K from Solanum bulbocastanum (Wild potato).